A 93-amino-acid chain; its full sequence is Class I hydrophobin SSP1 (93 aa).

An N-terminal signal peptide occupies residues 1 to 26 (MKYITAISMLATAALTAATPLNGVEA). 4 cysteine pairs are disulfide-bonded: Cys-39–Cys-71, Cys-47–Cys-65, Cys-48–Cys-56, and Cys-72–Cys-89.

The protein belongs to the fungal hydrophobin family. Self-assembles to form functional amyloid fibrils called rodlets. Self-assembly into fibrillar rodlets occurs spontaneously at hydrophobic:hydrophilic interfaces and the rodlets further associate laterally to form amphipathic monolayers.

The protein localises to the secreted. Its subcellular location is the cell wall. In terms of biological role, aerial growth, conidiation, and dispersal of filamentous fungi in the environment rely upon a capability of their secreting small amphipathic proteins called hydrophobins (HPBs) with low sequence identity. Class I can self-assemble into an outermost layer of rodlet bundles on aerial cell surfaces, conferring cellular hydrophobicity that supports fungal growth, development and dispersal; whereas Class II form highly ordered films at water-air interfaces through intermolecular interactions but contribute nothing to the rodlet structure. SSP1 is a class I hydrophobin that acts as an effector in the ericoid mycorrhizal interaction with Vaccinium myrtillus. May enhance attachment of the fungus to the root surface and protect the fungal hypha from plant defense compounds. The protein is Class I hydrophobin SSP1 of Oidiodendron maius (strain Zn).